Consider the following 617-residue polypeptide: Bifunctional TH2 protein, mitochondrial (617 aa).

A mitochondrion-targeting transit peptide spans 1–28; that stretch reads MRFLFPTRLINNSSLGLLRSPHTTAPIR. Asp-107 lines the substrate pocket. Catalysis depends on Cys-213, which acts as the Nucleophile. Residues Tyr-217 and Tyr-244 each contribute to the substrate site. The Proton donor role is filled by Glu-286.

The protein in the N-terminal section; belongs to the TenA family. It in the C-terminal section; belongs to the HAD-like hydrolase superfamily.

It is found in the mitochondrion. The protein localises to the cytoplasm. The catalysed reaction is thiamine phosphate + H2O = thiamine + phosphate. It carries out the reaction 4-amino-5-aminomethyl-2-methylpyrimidine + H2O = 4-amino-5-hydroxymethyl-2-methylpyrimidine + NH4(+). Its function is as follows. May be involved in the salvage of thiamine breakdown products. This protein has a haloacid dehalogenase family domain fused to its TenA domain. Phosphatase with the highest activity against thiamine monophosphate (ThMP) and, with a lower activity, against thiamine diphosphate (ThDP), flavin mononucleotide, inorganic pyrophosphate, CTP and dATP. Has a thiamine salvage hydrolase activity, but only against 4-amino-5-aminomethyl-2-methylpyrimidine (amino-HMP) and not against N-formylamino-HMP, desthiothiamine, thiamine, ThMP, and ThDP. The protein is Bifunctional TH2 protein, mitochondrial of Arabidopsis thaliana (Mouse-ear cress).